The sequence spans 448 residues: DNA primase DnaG (448 aa).

Residues 186–260 form the Toprim domain; the sequence is DSIIVVEGRN…EADFVARAPP (75 aa). Mg(2+) contacts are provided by Glu-192, Asp-234, and Asp-236. Residues 318–340 form a disordered region; sequence AEVIEEPPEQPPKNEEIREEQSQ. Over residues 329–338 the composition is skewed to basic and acidic residues; that stretch reads PKNEEIREEQ.

This sequence belongs to the archaeal DnaG primase family. In terms of assembly, forms a ternary complex with MCM helicase and DNA. Component of the archaeal exosome complex. The cofactor is Mg(2+).

It carries out the reaction ssDNA + n NTP = ssDNA/pppN(pN)n-1 hybrid + (n-1) diphosphate.. RNA polymerase that catalyzes the synthesis of short RNA molecules used as primers for DNA polymerase during DNA replication. Also part of the exosome, which is a complex involved in RNA degradation. Acts as a poly(A)-binding protein that enhances the interaction between heteromeric, adenine-rich transcripts and the exosome. This is DNA primase DnaG from Thermoplasma acidophilum (strain ATCC 25905 / DSM 1728 / JCM 9062 / NBRC 15155 / AMRC-C165).